We begin with the raw amino-acid sequence, 48 residues long: uncharacterized protein (48 aa).

This is an uncharacterized protein from Acidianus convivator (ABV).